Consider the following 330-residue polypeptide: Adenylate isopentenyltransferase 5, chloroplastic (330 aa).

A chloroplast-targeting transit peptide spans 1–39 (MKPCMTALRQVIQPLSLNFQGNMVDVPFFRRKDKVVFVM). 40–47 (GATGTGKS) contributes to the ATP binding site.

The protein belongs to the IPP transferase family. In terms of tissue distribution, expressed in root primordia, columella root caps, upper part of young inflorescences, and fruit abscission zones.

It is found in the plastid. Its subcellular location is the chloroplast. It carries out the reaction dimethylallyl diphosphate + ADP = N(6)-(dimethylallyl)adenosine 5'-diphosphate + diphosphate. The enzyme catalyses dimethylallyl diphosphate + ATP = N(6)-(dimethylallyl)adenosine 5'-triphosphate + diphosphate. Functionally, involved in cytokinin biosynthesis. Catalyzes the transfer of an isopentenyl group from dimethylallyl diphosphate (DMAPP) to ATP and ADP. In Arabidopsis thaliana (Mouse-ear cress), this protein is Adenylate isopentenyltransferase 5, chloroplastic (IPT5).